Consider the following 1392-residue polypeptide: DNA-directed RNA polymerase subunit beta' (1392 aa).

4 residues coordinate Zn(2+): cysteine 70, cysteine 72, cysteine 85, and cysteine 88. Mg(2+)-binding residues include aspartate 460, aspartate 462, and aspartate 464. Zn(2+) is bound by residues cysteine 810, cysteine 884, cysteine 891, and cysteine 894.

This sequence belongs to the RNA polymerase beta' chain family. The RNAP catalytic core consists of 2 alpha, 1 beta, 1 beta' and 1 omega subunit. When a sigma factor is associated with the core the holoenzyme is formed, which can initiate transcription. Requires Mg(2+) as cofactor. Zn(2+) serves as cofactor.

The catalysed reaction is RNA(n) + a ribonucleoside 5'-triphosphate = RNA(n+1) + diphosphate. Its function is as follows. DNA-dependent RNA polymerase catalyzes the transcription of DNA into RNA using the four ribonucleoside triphosphates as substrates. The sequence is that of DNA-directed RNA polymerase subunit beta' from Geobacter metallireducens (strain ATCC 53774 / DSM 7210 / GS-15).